Reading from the N-terminus, the 360-residue chain is Putative mRNA-decapping protein (360 aa).

The segment at His11–Glu28 adopts a CCHC-type zinc-finger fold. The region spanning Tyr163–Leu347 is the Nudix hydrolase domain. The Nudix box motif lies at Gly242–Gly264. Glu249 serves as a coordination point for Mg(2+). Residue Glu258 is the Nucleophile of the active site. Glu262 lines the Mg(2+) pocket.

It belongs to the Nudix hydrolase family. DIPP subfamily. Mg(2+) serves as cofactor. It depends on Mn(2+) as a cofactor.

The enzyme catalyses diphospho-myo-inositol polyphosphate + H2O = myo-inositol polyphosphate + phosphate.. Its function is as follows. Might function as a decapping enzyme required for the removal of the 5'-end m7GpppN cap tethered to viral and host mRNAs to allow their decay in cells. In addition to the mRNA cap, probably also efficiently hydrolyzes diphosphoinositol polyphosphates. In Acanthamoeba polyphaga (Amoeba), this protein is Putative mRNA-decapping protein.